Here is a 785-residue protein sequence, read N- to C-terminus: Polyribonucleotide nucleotidyltransferase (785 aa).

2 residues coordinate Mg(2+): D516 and D522. Residues 582–641 (PRVTTVKIPVDKIGMVIGPKGQTINAIQDETGAEISIEDDGTIYVGATNGPAAQAAVERI) form the KH domain. Residues 653–722 (GDRFLGTVVK…QRGKIYLDKV (70 aa)) enclose the S1 motif domain. The disordered stretch occupies residues 722–785 (VRPEGAEAPA…SRPRRRTRRS (64 aa)). Residues 734–764 (AAERPAGRDRGDRGPRDRGDRGGRGPDRGDS) show a composition bias toward basic and acidic residues.

It belongs to the polyribonucleotide nucleotidyltransferase family. Mg(2+) is required as a cofactor.

It is found in the cytoplasm. The catalysed reaction is RNA(n+1) + phosphate = RNA(n) + a ribonucleoside 5'-diphosphate. In terms of biological role, involved in mRNA degradation. Catalyzes the phosphorolysis of single-stranded polyribonucleotides processively in the 3'- to 5'-direction. This is Polyribonucleotide nucleotidyltransferase from Salinispora tropica (strain ATCC BAA-916 / DSM 44818 / JCM 13857 / NBRC 105044 / CNB-440).